A 532-amino-acid polypeptide reads, in one-letter code: Protoporphyrinogen oxidase (532 aa).

FAD-binding positions include 9–14 (GSGISG), Ile289, and 511–513 (VGI).

This sequence belongs to the protoporphyrinogen/coproporphyrinogen oxidase family. Protoporphyrinogen oxidase subfamily. It depends on FAD as a cofactor.

The protein localises to the mitochondrion. It catalyses the reaction protoporphyrinogen IX + 3 O2 = protoporphyrin IX + 3 H2O2. It participates in porphyrin-containing compound metabolism; protoporphyrin-IX biosynthesis; protoporphyrin-IX from protoporphyrinogen-IX: step 1/1. Catalyzes the 6-electron oxidation of protoporphyrinogen-IX to form protoporphyrin-IX. The protein is Protoporphyrinogen oxidase (ppox) of Dictyostelium discoideum (Social amoeba).